We begin with the raw amino-acid sequence, 446 residues long: Exodeoxyribonuclease 7 large subunit (446 aa).

Belongs to the XseA family. As to quaternary structure, heterooligomer composed of large and small subunits.

It localises to the cytoplasm. It carries out the reaction Exonucleolytic cleavage in either 5'- to 3'- or 3'- to 5'-direction to yield nucleoside 5'-phosphates.. Its function is as follows. Bidirectionally degrades single-stranded DNA into large acid-insoluble oligonucleotides, which are then degraded further into small acid-soluble oligonucleotides. The protein is Exodeoxyribonuclease 7 large subunit of Streptococcus pyogenes serotype M49 (strain NZ131).